The following is a 184-amino-acid chain: Thylakoid membrane protein slr0575 (184 aa).

The next 2 membrane-spanning stretches (helical) occupy residues 5–25 (ISLAAVGLTVGGILTITGFVA) and 31–51 (ATLNLAGFFYGIPLVLGGLAL).

The protein localises to the cellular thylakoid membrane. The sequence is that of Thylakoid membrane protein slr0575 from Synechocystis sp. (strain ATCC 27184 / PCC 6803 / Kazusa).